The sequence spans 935 residues: Coatomer subunit gamma (935 aa).

5 HEAT repeats span residues 258-296 (PQLFSQFRPLLSDWLSNKFESVQLETAKLITSFATRNSR), 337-372 (PEKIVVCNPELESLINDSNRNISTYAITTLLKTGTS), 373-410 (KNISSLISTITNFIHDVSDDFKIIIIDAVRTLSLNFPQ), 412-449 (WKSILNFLIDVLKNSEGGFKFKNSIVEALIDIVSFVPQ), and 524-562 (PTLYESIISLLKRIANDKDDEVRDRATIALEFIDSARNK). The interval 630-656 (KSETTLDTTPEAESVPEKRADANSFAG) is disordered. The residue at position 638 (Thr-638) is a Phosphothreonine. Residue Ser-643 is modified to Phosphoserine. Residue Lys-647 forms a Glycyl lysine isopeptide (Lys-Gly) (interchain with G-Cter in ubiquitin) linkage. Ser-653 bears the Phosphoserine mark.

The protein belongs to the COPG family. Oligomeric complex that consists of at least the alpha, beta, beta', gamma, delta, epsilon and zeta subunits. Interacts (via C-terminus) with GEA1 (via N-terminal region) and KEI1 (via C-terminal region).

It localises to the cytoplasm. It is found in the golgi apparatus membrane. Its subcellular location is the cytoplasmic vesicle. The protein localises to the COPI-coated vesicle membrane. The protein resides in the endosome. In terms of biological role, the coatomer is a cytosolic protein complex that binds to dilysine motifs and reversibly associates with Golgi non-clathrin-coated vesicles, which further mediate biosynthetic protein transport from the ER, via the Golgi up to the trans Golgi network. Coatomer complex is required for budding from Golgi membranes, and is essential for the retrograde Golgi-to-ER transport of dilysine-tagged proteins. The sequence is that of Coatomer subunit gamma (SEC21) from Saccharomyces cerevisiae (strain ATCC 204508 / S288c) (Baker's yeast).